The chain runs to 204 residues: Holliday junction branch migration complex subunit RuvA (204 aa).

Residues 1–64 (MIAQLKGSLA…EDAFLLYGFH (64 aa)) are domain I. A domain II region spans residues 65–143 (SESQRKVFNL…ALPMAAPTTA (79 aa)). A flexible linker region spans residues 144–154 (IGAATMAANPA). Residues 154 to 204 (AGLREEVASALLNLGYKPPQVDAALAKLFSAGEITDISVALKGALKLLAPA) are domain III.

The protein belongs to the RuvA family. As to quaternary structure, homotetramer. Forms an RuvA(8)-RuvB(12)-Holliday junction (HJ) complex. HJ DNA is sandwiched between 2 RuvA tetramers; dsDNA enters through RuvA and exits via RuvB. An RuvB hexamer assembles on each DNA strand where it exits the tetramer. Each RuvB hexamer is contacted by two RuvA subunits (via domain III) on 2 adjacent RuvB subunits; this complex drives branch migration. In the full resolvosome a probable DNA-RuvA(4)-RuvB(12)-RuvC(2) complex forms which resolves the HJ.

The protein resides in the cytoplasm. The RuvA-RuvB-RuvC complex processes Holliday junction (HJ) DNA during genetic recombination and DNA repair, while the RuvA-RuvB complex plays an important role in the rescue of blocked DNA replication forks via replication fork reversal (RFR). RuvA specifically binds to HJ cruciform DNA, conferring on it an open structure. The RuvB hexamer acts as an ATP-dependent pump, pulling dsDNA into and through the RuvAB complex. HJ branch migration allows RuvC to scan DNA until it finds its consensus sequence, where it cleaves and resolves the cruciform DNA. The chain is Holliday junction branch migration complex subunit RuvA from Magnetococcus marinus (strain ATCC BAA-1437 / JCM 17883 / MC-1).